The primary structure comprises 339 residues: Probable N5-carboxyaminoimidazole ribonucleotide mutase (339 aa).

Residues serine 11, aspartate 14, and arginine 41 each contribute to the substrate site.

Belongs to the AIR carboxylase family. Class I subfamily.

It carries out the reaction 5-carboxyamino-1-(5-phospho-D-ribosyl)imidazole + H(+) = 5-amino-1-(5-phospho-D-ribosyl)imidazole-4-carboxylate. It participates in purine metabolism; IMP biosynthesis via de novo pathway; 5-amino-1-(5-phospho-D-ribosyl)imidazole-4-carboxylate from 5-amino-1-(5-phospho-D-ribosyl)imidazole (N5-CAIR route): step 2/2. Functionally, catalyzes the conversion of N5-carboxyaminoimidazole ribonucleotide (N5-CAIR) to 4-carboxy-5-aminoimidazole ribonucleotide (CAIR). This chain is Probable N5-carboxyaminoimidazole ribonucleotide mutase, found in Methanobrevibacter smithii.